We begin with the raw amino-acid sequence, 289 residues long: Cell division protein ZipA (289 aa).

Position 1 (methionine 1) is a topological domain, periplasmic. A helical transmembrane segment spans residues 2–22 (DIGLREWLIVIGLIVIAGILF). Topologically, residues 23–289 (DGWRRMRGGK…HERRSLMQKR (267 aa)) are cytoplasmic. The segment at 66–141 (REPSFDEQDL…KEREKAPAVA (76 aa)) is disordered. Residues 81–99 (REAKERKGGKRQEEPRQGD) show a composition bias toward basic and acidic residues. A compositionally biased stretch (acidic residues) spans 100-114 (LDLDEGLALEADPSD).

The protein belongs to the ZipA family. As to quaternary structure, interacts with FtsZ via their C-terminal domains.

It is found in the cell inner membrane. Essential cell division protein that stabilizes the FtsZ protofilaments by cross-linking them and that serves as a cytoplasmic membrane anchor for the Z ring. Also required for the recruitment to the septal ring of downstream cell division proteins. This chain is Cell division protein ZipA, found in Pseudomonas aeruginosa (strain LESB58).